The sequence spans 230 residues: Ureidoacrylate amidohydrolase RutB (230 aa).

Residue aspartate 24 is the Proton acceptor of the active site. Lysine 133 is a catalytic residue. Cysteine 166 functions as the Nucleophile in the catalytic mechanism.

Belongs to the isochorismatase family. RutB subfamily.

It catalyses the reaction (Z)-3-ureidoacrylate + H2O + H(+) = (Z)-3-aminoacrylate + NH4(+) + CO2. The catalysed reaction is (Z)-3-ureidoacrylate + H2O = (Z)-3-aminoacrylate + carbamate + H(+). The enzyme catalyses (Z)-2-methylureidoacrylate + H2O + H(+) = (Z)-2-methylaminoacrylate + NH4(+) + CO2. In terms of biological role, hydrolyzes ureidoacrylate to form aminoacrylate and carbamate. The carbamate hydrolyzes spontaneously, thereby releasing one of the nitrogen atoms of the pyrimidine ring as ammonia and one of its carbon atoms as CO2. The chain is Ureidoacrylate amidohydrolase RutB from Escherichia coli O150:H5 (strain SE15).